A 541-amino-acid chain; its full sequence is Membrane protein insertase YidC (541 aa).

The next 5 helical transmembrane spans lie at 7–27 (LLFM…QVDY), 345–365 (LVQN…AILY), 415–435 (LGGC…YWTF), 453–473 (LSAQ…MFLL), and 492–512 (FMPL…VLYW).

Belongs to the OXA1/ALB3/YidC family. Type 1 subfamily. Interacts with the Sec translocase complex via SecD. Specifically interacts with transmembrane segments of nascent integral membrane proteins during membrane integration.

It is found in the cell inner membrane. In terms of biological role, required for the insertion and/or proper folding and/or complex formation of integral membrane proteins into the membrane. Involved in integration of membrane proteins that insert both dependently and independently of the Sec translocase complex, as well as at least some lipoproteins. Aids folding of multispanning membrane proteins. In Histophilus somni (strain 129Pt) (Haemophilus somnus), this protein is Membrane protein insertase YidC.